A 190-amino-acid polypeptide reads, in one-letter code: Translation initiation factor IF-3 (190 aa).

The protein belongs to the IF-3 family. Monomer.

The protein resides in the cytoplasm. Its function is as follows. IF-3 binds to the 30S ribosomal subunit and shifts the equilibrium between 70S ribosomes and their 50S and 30S subunits in favor of the free subunits, thus enhancing the availability of 30S subunits on which protein synthesis initiation begins. The protein is Translation initiation factor IF-3 of Prochlorococcus marinus (strain AS9601).